The chain runs to 470 residues: Nuclear receptor subfamily 0 group B member 1 (470 aa).

3 repeat units span residues 1 to 67, 68 to 133, and 134 to 200. The segment at 1–253 is 4 X 67 AA tandem repeats; that stretch reads MAGENHQWQG…RPVALKNPQV (253 aa). 3 short sequence motifs (LXXLL motif) span residues 13 to 17, 80 to 84, and 146 to 150; these read LYNML, LYSML, and LYSLL. A 4; truncated repeat occupies 201–253; the sequence is FCGEDHPQQGSTLYCMPTSTNQAQAAPEERPRAPWWDASSGALRPVALKNPQV. The 255-residue stretch at 215-469 folds into the NR LBD domain; the sequence is CMPTSTNQAQ…DMMLEMLCTK (255 aa). Residues 461 to 466 carry the AF-2 motif motif; the sequence is MMLEML.

The protein belongs to the nuclear hormone receptor family. NR0 subfamily. Homodimer. Interacts with NR5A1, NR5A2, NR0B2 and with COPS2. Interacts with ESRRB; represses ESRRB activity at the GATA6 promoter.

It is found in the nucleus. Its subcellular location is the cytoplasm. Nuclear receptor that lacks a DNA-binding domain and acts as a corepressor that inhibits the transcriptional activity of other nuclear receptors through heterodimeric interactions. Component of a cascade required for the development of the hypothalamic-pituitary-adrenal-gonadal axis. May also have a role in the development of the embryo and in the maintenance of embryonic stem cell pluripotency. This Pongo pygmaeus (Bornean orangutan) protein is Nuclear receptor subfamily 0 group B member 1 (NR0B1).